We begin with the raw amino-acid sequence, 319 residues long: MQLSSYHDVIKAAERLEGFANRTPVFTSRTLDAETGAQVFIKCENLQRTGSFKFRGAFNALSRFDEAQRKAGVVAFSSGNHAQGIALAARLLQMPATIVMPTDAPAAKVAATREYGATVVFYDRITEDREQIGRTLAEQHGMTLIPSYDHPDVLAGQGTAAKELLEFTGPLDALFVGLGGGGMLSGTALATRALSPDCLLYGVEPEAGNDGQRSFQTGSIVHIDTPATIADGAQTQHLGNHTFPIIRENVNDILTVSDAELVESMRFFMQRMKMVVEPTGCLGLAALRNLKQQFRGQRVGIIVTGGNVDIEKYASLLKG.

Position 53 is an N6-(pyridoxal phosphate)lysine (Lys-53). Residues Asn-80, 179–183 (GGGGM), and Thr-304 contribute to the pyridoxal 5'-phosphate site.

Belongs to the serine/threonine dehydratase family. In terms of assembly, may be either a monomer or a homodimer. Pyridoxal 5'-phosphate serves as cofactor. It depends on Mn(2+) as a cofactor. The cofactor is Mg(2+). Requires Ca(2+) as cofactor.

It carries out the reaction (3S)-3-hydroxy-L-aspartate = oxaloacetate + NH4(+). With respect to regulation, is strongly inhibited by hydroxylamine and EDTA in vitro. Functionally, catalyzes the deamination of L-threo-3-hydroxyaspartate to oxaloacetate and ammonia. Shows a high specificity towards L-threo-3-hydroxyaspartate as other 3-hydroxyaminoacids, i.e. D,L-erythro- and D-threo-3-hydroxyaspartate, D-threonine, L-threonine, D,L-allothreonine, D,L-threo-3-phenylserine, D-serine, and L-serine, are not substrates for this enzyme. Exhibits no detectable serine and aspartate racemase activity. Might play a role in the detoxification of naturally occurring 3-hydroxyaspartate in Pseudomonas sp. T62 cells. The polypeptide is L-threo-3-hydroxyaspartate ammonia-lyase (Pseudomonas sp).